Consider the following 845-residue polypeptide: Protein translocase subunit SecA 1 (845 aa).

Residues Gln-91, 109–113, and Asp-498 each bind ATP; that span reads GEGKT. The disordered stretch occupies residues 795-845; it reads TDFGTAQHVSAEDGKEKAKKQPIVKGDKVGRNDPCPCGSGKKYKNCHGKEE. Zn(2+)-binding residues include Cys-829, Cys-831, Cys-840, and His-841. The segment covering 835–845 has biased composition (basic residues); it reads KKYKNCHGKEE.

Belongs to the SecA family. In terms of assembly, monomer and homodimer. Part of the essential Sec protein translocation apparatus which comprises SecA, SecYEG and auxiliary proteins SecDF. Other proteins may also be involved. It depends on Zn(2+) as a cofactor.

It is found in the cell membrane. The protein resides in the cytoplasm. It carries out the reaction ATP + H2O + cellular proteinSide 1 = ADP + phosphate + cellular proteinSide 2.. In terms of biological role, part of the Sec protein translocase complex. Interacts with the SecYEG preprotein conducting channel. Has a central role in coupling the hydrolysis of ATP to the transfer of proteins into and across the cell membrane, serving as an ATP-driven molecular motor driving the stepwise translocation of polypeptide chains across the membrane. The protein is Protein translocase subunit SecA 1 of Staphylococcus haemolyticus (strain JCSC1435).